Consider the following 689-residue polypeptide: Glycine--tRNA ligase beta subunit (689 aa).

Belongs to the class-II aminoacyl-tRNA synthetase family. In terms of assembly, tetramer of two alpha and two beta subunits.

The protein localises to the cytoplasm. The catalysed reaction is tRNA(Gly) + glycine + ATP = glycyl-tRNA(Gly) + AMP + diphosphate. The polypeptide is Glycine--tRNA ligase beta subunit (Shewanella halifaxensis (strain HAW-EB4)).